Consider the following 347-residue polypeptide: Protein RecA (347 aa).

66-73 (GPESSGKT) contributes to the ATP binding site.

It belongs to the RecA family.

It localises to the cytoplasm. Functionally, can catalyze the hydrolysis of ATP in the presence of single-stranded DNA, the ATP-dependent uptake of single-stranded DNA by duplex DNA, and the ATP-dependent hybridization of homologous single-stranded DNAs. It interacts with LexA causing its activation and leading to its autocatalytic cleavage. This Burkholderia cepacia (Pseudomonas cepacia) protein is Protein RecA.